The chain runs to 257 residues: Imidazole glycerol phosphate synthase subunit HisF (257 aa).

Active-site residues include D11 and D130.

It belongs to the HisA/HisF family. As to quaternary structure, heterodimer of HisH and HisF.

Its subcellular location is the cytoplasm. It carries out the reaction 5-[(5-phospho-1-deoxy-D-ribulos-1-ylimino)methylamino]-1-(5-phospho-beta-D-ribosyl)imidazole-4-carboxamide + L-glutamine = D-erythro-1-(imidazol-4-yl)glycerol 3-phosphate + 5-amino-1-(5-phospho-beta-D-ribosyl)imidazole-4-carboxamide + L-glutamate + H(+). It participates in amino-acid biosynthesis; L-histidine biosynthesis; L-histidine from 5-phospho-alpha-D-ribose 1-diphosphate: step 5/9. In terms of biological role, IGPS catalyzes the conversion of PRFAR and glutamine to IGP, AICAR and glutamate. The HisF subunit catalyzes the cyclization activity that produces IGP and AICAR from PRFAR using the ammonia provided by the HisH subunit. The polypeptide is Imidazole glycerol phosphate synthase subunit HisF (Aeromonas hydrophila subsp. hydrophila (strain ATCC 7966 / DSM 30187 / BCRC 13018 / CCUG 14551 / JCM 1027 / KCTC 2358 / NCIMB 9240 / NCTC 8049)).